The chain runs to 302 residues: MKKNRLNLNGVVVINKTQGLSSNKVLQKLKYLFNAQKAGHTGTLDPMATGVLPICFGRATKIAQYLLDSDKEYIATIKLGIETDSGDAEGEIIAKNADIPELTVEYLETVLAKFRGDIVQIPPMYSALKHNGQPLYKLAREGKAIEVKPRNINIYELELLEFNTDSLKIRVKCSKGTYIRSLAIDIGKALGCGGHLIALQRTQSGPFRIETALDLDNLKDLSFEQKLASIASVESVFIDKPIYSLVEEEKDDLYKRGLFADKSHLDGTVRIYDDEKFVAIAEFDKGKLISKKFFDQDIFISE.

Aspartate 45 (nucleophile) is an active-site residue.

Belongs to the pseudouridine synthase TruB family. Type 1 subfamily.

It carries out the reaction uridine(55) in tRNA = pseudouridine(55) in tRNA. Its function is as follows. Responsible for synthesis of pseudouridine from uracil-55 in the psi GC loop of transfer RNAs. In Francisella philomiragia subsp. philomiragia (strain ATCC 25017 / CCUG 19701 / FSC 153 / O#319-036), this protein is tRNA pseudouridine synthase B.